The following is a 445-amino-acid chain: Scarecrow-like protein 18 (445 aa).

Residues 1-21 (MLTSFKSSSSSSEDATATTTE) are compositionally biased toward low complexity. The disordered stretch occupies residues 1-26 (MLTSFKSSSSSSEDATATTTENPPPL). The region spanning 32-445 (SAATSASHHL…RPLFSVSSWK (414 aa)) is the GRAS domain. The leucine repeat I (LRI) stretch occupies residues 39-127 (HHLRRLLFTA…STVFTSSVCK (89 aa)). Residues 146–217 (YLWLNQLTPF…SPPPSLRITG (72 aa)) are VHIID. A VHIID motif is present at residues 179–183 (LHILD). Residues 227-259 (RTGDRLTRFADSLGLQFQFHTLVIVEEDLAGLL) form a leucine repeat II (LRII) region. Residues 275–366 (IAVNCVHFLH…QRWFGKEILD (92 aa)) are PFYRE. Positions 369–445 (AAEETERKQR…RPLFSVSSWK (77 aa)) are SAW.

It belongs to the GRAS family. In terms of tissue distribution, expressed in roots and flowers.

It is found in the nucleus. Its function is as follows. Probable transcription factor required for axillary (lateral) shoot meristem formation during vegetative development. Seems to act upstream of REVOLUTA. In Arabidopsis thaliana (Mouse-ear cress), this protein is Scarecrow-like protein 18 (SCL18).